The primary structure comprises 637 residues: Sodium-dependent phosphate transport protein 2A (637 aa).

Residues 1-103 (MMSYSERLGG…LAQVGTKLLK (103 aa)) are Cytoplasmic-facing. Phosphoserine is present on residues serine 14 and serine 34. A helical membrane pass occupies residues 104–125 (VPLMLAFLYLFVCSLDVLSSAF). Residues 126 to 145 (QLAGGKVAGDIFKDNAILSN) are Extracellular-facing. Residues 146 to 163 (PVAGLVVGILVTVLVQSS) form a helical membrane-spanning segment. Residues 164–165 (ST) are Cytoplasmic-facing. Residues 166 to 185 (STSIIVSMVSSGLLEVSSAI) form a helical membrane-spanning segment. Residues 186–345 (PIIMGSNIGT…HIFVDTGLPD (160 aa)) are Extracellular-facing. 2 cysteine pairs are disulfide-bonded: cysteine 225–cysteine 520 and cysteine 306–cysteine 334. Residues asparagine 298 and asparagine 328 are each glycosylated (N-linked (GlcNAc...) asparagine). A helical transmembrane segment spans residues 346–368 (LAVGLILLAGSLVVLCTCLILLV). Over 369-410 (KMLNSLLKGQVMSSRRSSTQTDFPAPFTWVTGYFAMVVGASM) the chain is Cytoplasmic. A helical membrane pass occupies residues 411 to 434 (TFVVQSSSVFTSAITPLIGLGVIS). At 435–464 (IERAYPLTLGSNIGTTTTAILAALASPREK) the chain is on the extracellular side. The helical transmembrane segment at 465-485 (LSSSFQIALCHFFFNISGILL) threads the bilayer. Topologically, residues 486–511 (WYPLPCTRLPIRMAKALGKRTAKYRW) are cytoplasmic. Residue threonine 506 is modified to Phosphothreonine; by PKC. Residues 512–532 (FAVLYLLVCFLLLPSLVFGIS) traverse the membrane as a helical segment. Residues 533–537 (MAGWQ) are Extracellular-facing. Residues 538-559 (AMVGVGTPFGALLAFVVLVNVL) traverse the membrane as a helical segment. Residues 560 to 637 (QSRSPGHLPK…LPAHHNATRL (78 aa)) are Cytoplasmic-facing. Serine 605 carries the post-translational modification Phosphoserine. Threonine 621 carries the post-translational modification Phosphothreonine. At serine 623 the chain carries Phosphoserine.

The protein belongs to the SLC34A transporter family. As to quaternary structure, interacts via its C-terminal region with NHERF4. Interacts with NHERF1. Interacts with TMEM174; regulates SLC34A1 internalization by PTH and FGF23. In terms of tissue distribution, kidney.

Its subcellular location is the apical cell membrane. The protein resides in the cell membrane. The enzyme catalyses 3 Na(+)(out) + phosphate(out) = 3 Na(+)(in) + phosphate(in). Functionally, involved in actively transporting phosphate into cells via Na(+) cotransport in the renal brush border membrane. The cotransport has a Na(+):Pi stoichiometry of 3:1 and is electrogenic. The protein is Sodium-dependent phosphate transport protein 2A of Mus musculus (Mouse).